The sequence spans 105 residues: Large ribosomal subunit protein uL24 (105 aa).

It belongs to the universal ribosomal protein uL24 family. As to quaternary structure, part of the 50S ribosomal subunit.

One of two assembly initiator proteins, it binds directly to the 5'-end of the 23S rRNA, where it nucleates assembly of the 50S subunit. In terms of biological role, one of the proteins that surrounds the polypeptide exit tunnel on the outside of the subunit. This chain is Large ribosomal subunit protein uL24, found in Sorangium cellulosum (strain So ce56) (Polyangium cellulosum (strain So ce56)).